The primary structure comprises 308 residues: Elongation factor Ts (308 aa).

The tract at residues 79–82 (TDFV) is involved in Mg(2+) ion dislocation from EF-Tu.

This sequence belongs to the EF-Ts family.

The protein resides in the cytoplasm. Functionally, associates with the EF-Tu.GDP complex and induces the exchange of GDP to GTP. It remains bound to the aminoacyl-tRNA.EF-Tu.GTP complex up to the GTP hydrolysis stage on the ribosome. This chain is Elongation factor Ts, found in Bdellovibrio bacteriovorus (strain ATCC 15356 / DSM 50701 / NCIMB 9529 / HD100).